The following is a 150-amino-acid chain: D-aminoacyl-tRNA deacylase (150 aa).

Residues 138 to 139 carry the Gly-cisPro motif, important for rejection of L-amino acids motif; the sequence is GP.

It belongs to the DTD family. Homodimer.

It localises to the cytoplasm. The catalysed reaction is glycyl-tRNA(Ala) + H2O = tRNA(Ala) + glycine + H(+). It carries out the reaction a D-aminoacyl-tRNA + H2O = a tRNA + a D-alpha-amino acid + H(+). Functionally, an aminoacyl-tRNA editing enzyme that deacylates mischarged D-aminoacyl-tRNAs. Also deacylates mischarged glycyl-tRNA(Ala), protecting cells against glycine mischarging by AlaRS. Acts via tRNA-based rather than protein-based catalysis; rejects L-amino acids rather than detecting D-amino acids in the active site. By recycling D-aminoacyl-tRNA to D-amino acids and free tRNA molecules, this enzyme counteracts the toxicity associated with the formation of D-aminoacyl-tRNA entities in vivo and helps enforce protein L-homochirality. The polypeptide is D-aminoacyl-tRNA deacylase (Akkermansia muciniphila (strain ATCC BAA-835 / DSM 22959 / JCM 33894 / BCRC 81048 / CCUG 64013 / CIP 107961 / Muc)).